Consider the following 529-residue polypeptide: Na(+)/H(+) antiporter NhaB (529 aa).

12 helical membrane-spanning segments follow: residues 13-33 (FLGKAPDWYKVAIISFLIINP), 34-54 (IVFFFVDPFVAGWLLVVEFIF), 90-110 (LVANIEVLLLLVFMVAGIYFM), 113-133 (LLLFIFTKILLGIRSKAILSL), 149-166 (LTVIAVVISVAVGFYSIY), 205-225 (LLMHAGVGTALGGVTTMVGEP), 241-261 (FLIRMAPVTLPVFVCGLLTCF), 306-326 (GLIAVWLIVGLALHLAAVGLI), 327-347 (GLSVIILATAFTGVIEEHSLG), 351-371 (EEALPFTALLAVFFSIVAVII), 451-471 (ATPNGQAAFLFLLTSALAPLI), and 479-499 (VIMALPYTIVLALVGLFGIVF).

It belongs to the NhaB Na(+)/H(+) (TC 2.A.34) antiporter family.

It localises to the cell inner membrane. It carries out the reaction 2 Na(+)(in) + 3 H(+)(out) = 2 Na(+)(out) + 3 H(+)(in). Functionally, na(+)/H(+) antiporter that extrudes sodium in exchange for external protons. This chain is Na(+)/H(+) antiporter NhaB, found in Vibrio vulnificus (strain YJ016).